Reading from the N-terminus, the 156-residue chain is ATP synthase subunit b (156 aa).

A helical membrane pass occupies residues 12 to 32; it reads VAFFIFVLFCMKFVWPPVIAA.

Belongs to the ATPase B chain family. In terms of assembly, F-type ATPases have 2 components, F(1) - the catalytic core - and F(0) - the membrane proton channel. F(1) has five subunits: alpha(3), beta(3), gamma(1), delta(1), epsilon(1). F(0) has three main subunits: a(1), b(2) and c(10-14). The alpha and beta chains form an alternating ring which encloses part of the gamma chain. F(1) is attached to F(0) by a central stalk formed by the gamma and epsilon chains, while a peripheral stalk is formed by the delta and b chains.

It localises to the cell inner membrane. Functionally, f(1)F(0) ATP synthase produces ATP from ADP in the presence of a proton or sodium gradient. F-type ATPases consist of two structural domains, F(1) containing the extramembraneous catalytic core and F(0) containing the membrane proton channel, linked together by a central stalk and a peripheral stalk. During catalysis, ATP synthesis in the catalytic domain of F(1) is coupled via a rotary mechanism of the central stalk subunits to proton translocation. Component of the F(0) channel, it forms part of the peripheral stalk, linking F(1) to F(0). The polypeptide is ATP synthase subunit b (Pseudomonas paraeruginosa (strain DSM 24068 / PA7) (Pseudomonas aeruginosa (strain PA7))).